Consider the following 160-residue polypeptide: Transcriptional repressor NrdR (160 aa).

The segment covering 1 to 11 has biased composition (polar residues); sequence MRCPNCNSLDT. Residues 1-20 form a disordered region; the sequence is MRCPNCNSLDTQVKDSRPTE. The segment at 3–34 is a zinc-finger region; that stretch reads CPNCNSLDTQVKDSRPTEDSSVIRRRRVCVAC. The region spanning 49 to 139 is the ATP-cone domain; the sequence is LTVIKRNGRR…VYRNFREAKD (91 aa).

It belongs to the NrdR family. Zn(2+) serves as cofactor.

Negatively regulates transcription of bacterial ribonucleotide reductase nrd genes and operons by binding to NrdR-boxes. This chain is Transcriptional repressor NrdR, found in Bradyrhizobium diazoefficiens (strain JCM 10833 / BCRC 13528 / IAM 13628 / NBRC 14792 / USDA 110).